The primary structure comprises 307 residues: Ornithine carbamoyltransferase (307 aa).

Carbamoyl phosphate-binding positions include 54 to 57, Q81, R105, and 132 to 135; these read STRT and HPCQ. Residues N163, D221, and 225–226 contribute to the L-ornithine site; that span reads SM. Carbamoyl phosphate-binding positions include 261–262 and R289; that span reads CL.

Belongs to the aspartate/ornithine carbamoyltransferase superfamily. OTCase family.

Its subcellular location is the cytoplasm. The enzyme catalyses carbamoyl phosphate + L-ornithine = L-citrulline + phosphate + H(+). It functions in the pathway amino-acid biosynthesis; L-arginine biosynthesis; L-arginine from L-ornithine and carbamoyl phosphate: step 1/3. Functionally, reversibly catalyzes the transfer of the carbamoyl group from carbamoyl phosphate (CP) to the N(epsilon) atom of ornithine (ORN) to produce L-citrulline. The protein is Ornithine carbamoyltransferase of Aromatoleum aromaticum (strain DSM 19018 / LMG 30748 / EbN1) (Azoarcus sp. (strain EbN1)).